We begin with the raw amino-acid sequence, 200 residues long: 3-isopropylmalate dehydratase small subunit (200 aa).

This sequence belongs to the LeuD family. LeuD type 1 subfamily. In terms of assembly, heterodimer of LeuC and LeuD.

It carries out the reaction (2R,3S)-3-isopropylmalate = (2S)-2-isopropylmalate. The protein operates within amino-acid biosynthesis; L-leucine biosynthesis; L-leucine from 3-methyl-2-oxobutanoate: step 2/4. Its function is as follows. Catalyzes the isomerization between 2-isopropylmalate and 3-isopropylmalate, via the formation of 2-isopropylmaleate. This chain is 3-isopropylmalate dehydratase small subunit, found in Pseudarthrobacter chlorophenolicus (strain ATCC 700700 / DSM 12829 / CIP 107037 / JCM 12360 / KCTC 9906 / NCIMB 13794 / A6) (Arthrobacter chlorophenolicus).